The chain runs to 215 residues: Redox-sensing transcriptional repressor Rex (215 aa).

A DNA-binding region (H-T-H motif) is located at residues 18-57 (LYYRFLKNLHASGKQRVSSAELSDAVKVDSATIRRDFSYF). Residue 92–97 (GVGNLG) participates in NAD(+) binding.

This sequence belongs to the transcriptional regulatory Rex family. Homodimer.

It localises to the cytoplasm. Its function is as follows. Modulates transcription in response to changes in cellular NADH/NAD(+) redox state. This Bacillus subtilis (strain 168) protein is Redox-sensing transcriptional repressor Rex.